A 96-amino-acid chain; its full sequence is Cathelin (96 aa).

At glutamine 1 the chain carries Pyrrolidone carboxylic acid. The segment at 31–50 is disordered; it reads DQPPKADEDPGTPKPVSFTV. 2 disulfides stabilise this stretch: cysteine 55–cysteine 66 and cysteine 73–cysteine 90.

It belongs to the cathelicidin family.

It localises to the secreted. Probably a microbicidal peptide. This chain is Cathelin, found in Sus scrofa (Pig).